The chain runs to 101 residues: MTSKLAVALLAAFLLSAALCEGAVLPRSAKELRCLCIKTYSKPFHPKFIKELRVIESGPHCVNTEIIVKLSDGRELCLDPKEPWVQRVVEKFLKRAESQNS.

The first 22 residues, 1–22 (MTSKLAVALLAAFLLSAALCEG), serve as a signal peptide directing secretion. Position 27 is a citrulline (Arg27). 2 cysteine pairs are disulfide-bonded: Cys34/Cys61 and Cys36/Cys77.

Belongs to the intercrine alpha (chemokine CxC) family. In terms of assembly, homodimer. Interacts with TNFAIP6 (via Link domain); this interaction interferes with chemokine binding to glycosaminoglycans. In terms of processing, citrullination at Arg-27 prevents proteolysis, and dampens tissue inflammation, it also enhances leukocytosis, possibly through impaired chemokine clearance from the blood circulation.

The protein localises to the secreted. Chemotactic factor that mediates inflammatory response by attracting neutrophils, basophils, and T-cells to clear pathogens and protect the host from infection. Also plays an important role in neutrophil activation. Released in response to an inflammatory stimulus, exerts its effect by binding to the G-protein-coupled receptors CXCR1 and CXCR2, primarily found in neutrophils, monocytes and endothelial cells. G-protein heterotrimer (alpha, beta, gamma subunits) constitutively binds to CXCR1/CXCR2 receptor and activation by IL8 leads to beta and gamma subunits release from Galpha (GNAI2 in neutrophils) and activation of several downstream signaling pathways including PI3K and MAPK pathways. This Cercocebus atys (Sooty mangabey) protein is Interleukin-8 (CXCL8).